We begin with the raw amino-acid sequence, 349 residues long: 4-hydroxy-3-methylbut-2-en-1-yl diphosphate synthase (flavodoxin) (349 aa).

Residues C264, C267, C299, and E306 each coordinate [4Fe-4S] cluster.

It belongs to the IspG family. The cofactor is [4Fe-4S] cluster.

It carries out the reaction (2E)-4-hydroxy-3-methylbut-2-enyl diphosphate + oxidized [flavodoxin] + H2O + 2 H(+) = 2-C-methyl-D-erythritol 2,4-cyclic diphosphate + reduced [flavodoxin]. It participates in isoprenoid biosynthesis; isopentenyl diphosphate biosynthesis via DXP pathway; isopentenyl diphosphate from 1-deoxy-D-xylulose 5-phosphate: step 5/6. Functionally, converts 2C-methyl-D-erythritol 2,4-cyclodiphosphate (ME-2,4cPP) into 1-hydroxy-2-methyl-2-(E)-butenyl 4-diphosphate. The chain is 4-hydroxy-3-methylbut-2-en-1-yl diphosphate synthase (flavodoxin) from Clostridium perfringens (strain 13 / Type A).